A 300-amino-acid chain; its full sequence is Bifunctional protein FolD (300 aa).

NADP(+)-binding positions include 168-170 (GRS), serine 193, and isoleucine 234.

It belongs to the tetrahydrofolate dehydrogenase/cyclohydrolase family. In terms of assembly, homodimer.

The catalysed reaction is (6R)-5,10-methylene-5,6,7,8-tetrahydrofolate + NADP(+) = (6R)-5,10-methenyltetrahydrofolate + NADPH. The enzyme catalyses (6R)-5,10-methenyltetrahydrofolate + H2O = (6R)-10-formyltetrahydrofolate + H(+). The protein operates within one-carbon metabolism; tetrahydrofolate interconversion. Its function is as follows. Catalyzes the oxidation of 5,10-methylenetetrahydrofolate to 5,10-methenyltetrahydrofolate and then the hydrolysis of 5,10-methenyltetrahydrofolate to 10-formyltetrahydrofolate. The chain is Bifunctional protein FolD from Ehrlichia ruminantium (strain Gardel).